The following is a 500-amino-acid chain: MSDSPKNAPRITDEADVVLIGAGIMSSTLGAMLRQLEPSWTQIVFERLDGPAQESSSPWNNAGTGHSALCELNYTPEVKGKVEIAKAVGINEKFQVSRQFWSHLVEEGVLSDPKEFINPVPHVSFGQGADQVAYIKARYEALKDHPLFQGMTYADDEATFTEKLPLMAKGRDFSDPVAISWIDEGTDINYGAQTKQYLDAAEVEGTEIRYGHEVKSIKADGAKWIVTVKNVHTGDTKTIKANFVFVGAGGYALDLLRSAGIPQVKGFAGFPVSGLWLRCTNEELIEQHAAKVYGKASVGAPPMSVPHLDTRVIEGEKGLLFGPYGGWTPKFLKEGSYLDLFKSIRPDNIPSYLGVAAQEFDLTKYLVTEVLKDQDKRMDALREYMPEAQNGDWETIVAGQRVQVIKPAGFPKFGSLEFGTTLINNSEGTIAGLLGASPGASIAPSAMIELLERCFGDRMIEWGDKLKDMIPSYGKKLASEPALFEQQWARTQKTLKLEEA.

Belongs to the MQO family. It depends on FAD as a cofactor.

It catalyses the reaction (S)-malate + a quinone = a quinol + oxaloacetate. It participates in carbohydrate metabolism; tricarboxylic acid cycle; oxaloacetate from (S)-malate (quinone route): step 1/1. The protein is Probable malate:quinone oxidoreductase of Corynebacterium glutamicum (strain R).